We begin with the raw amino-acid sequence, 569 residues long: MTIAAAPARQTDRSATGFNPAYVTTAKAVSVPVQVPPATVVSEGLGKDALISWFRGEFAAANAIIDAMCSHLRIAEEAVSGSEYEAVFAAIHRRRLNWIPVLQMQKYHSIAEVAIELQKVAAKKAEDLKQKKTEEEAEEDLKEVVATEEEEVKKECFNGEKVTENDVNGDVEDVEDDSPTSDITDSGSHQDVHQTVVADTAHQIICHSHEDCDARSCEIKPIKGFQAKEQVKGHTVNVVKGLKLYEELLKEDEISKLLDFVAELREAGINGKLAGESFILFNKQIKGNKRELIQLGVPIFGHVKADENSNDTNNSVNIEPIPPLLESVIDHFVTWRLIPEYKRPNGCVINFFEEGEYSQPFLKPPHLEQPISTLVLSESTMAYGRILSSDNEGNFRGPLTLSLKQGSLLVMRGNSADMARHVMCPSQNKRVSITFFRIRPDTYHNHSQPNSPRNDGVMTMWQPYQMTPTPFLNGYDHSIDMMPKLGVLRPPMVMMAPPPVQPMILPSPNVMGTGGGTGVFLPWASVNSSRKHVKHLPPRAQKKRLLPLPPAASSSPAGGSTSEPVITVG.

Positions 118–151 (QKVAAKKAEDLKQKKTEEEAEEDLKEVVATEEEE) form a coiled coil. Residues 164–190 (ENDVNGDVEDVEDDSPTSDITDSGSHQ) form a disordered region. Positions 167 to 179 (VNGDVEDVEDDSP) are enriched in acidic residues. Polar residues predominate over residues 180–189 (TSDITDSGSH). Fe cation contacts are provided by histidine 366, glutamate 368, and histidine 421. Arginine 430 serves as a coordination point for 2-oxoglutarate. Over residues 531-545 (KHVKHLPPRAQKKRL) the composition is skewed to basic residues. The disordered stretch occupies residues 531-569 (KHVKHLPPRAQKKRLLPLPPAASSSPAGGSTSEPVITVG). Low complexity predominate over residues 551–560 (AASSSPAGGS).

This sequence belongs to the alkB family. It depends on Fe(2+) as a cofactor.

The catalysed reaction is an N(6)-methyladenosine in mRNA + 2-oxoglutarate + O2 = an adenosine in mRNA + formaldehyde + succinate + CO2. Functionally, dioxygenase that demethylates RNA by oxidative demethylation: specifically demethylates N(6)-methyladenosine (m6A) RNA, the most prevalent internal modification of messenger RNA (mRNA) in higher eukaryotes. ALKBH10B-mediated mRNA m6A demethylation stabilizes the mRNA of the key flowering time regulators FT, SPL3 and SPL9, which are involved in the control of floral transition. This chain is RNA demethylase ALKBH10B, found in Arabidopsis thaliana (Mouse-ear cress).